Here is a 203-residue protein sequence, read N- to C-terminus: Alpha-amylase/subtilisin inhibitor (203 aa).

Residues 1–12 (MGSRRAGSSSSP) are compositionally biased toward polar residues. The N-terminal stretch at 1-22 (MGSRRAGSSSSPLFWPAPPSRA) is a signal peptide. The interval 1–34 (MGSRRAGSSSSPLFWPAPPSRAADPPPVHDTDGH) is disordered. Over residues 15–26 (WPAPPSRAADPP) the composition is skewed to pro residues. 2 disulfides stabilise this stretch: Cys65-Cys112 and Cys166-Cys170.

Belongs to the protease inhibitor I3 (leguminous Kunitz-type inhibitor) family.

Its function is as follows. This protein inhibits independently subtilisin and alpha-amylase. The chain is Alpha-amylase/subtilisin inhibitor from Hordeum vulgare (Barley).